The sequence spans 279 residues: MFGPRDSRVRGWFLLDSYLPTFTLTIVYLLSIWLGNKYMKNRPALSLRGILTLYNLGITLLSAYMLVELVLSSWEGGYNLQCQNLDSAGEGDIRVAKVLWWYYFSKLVEFLDTIFFVLRKKTSQITFLHVYHHASMFNIWWCVLNWIPCGQSFFGPTLNSFIHILMYSYYGLSVFPSMHRYLWWKKYLTQAQLVQFVLTITHTLSAVVKPCGFPFGCLIFQSSYMMTLVILFLNFYIQTYRKKPMKKEMPEGAAGKEVKNGFPKAHSIAANGVTDKKVQ.

Transmembrane regions (helical) follow at residues 12-32 (WFLL…LLSI), 50-70 (ILTL…VELV), 98-118 (VLWW…FFVL), 136-156 (MFNI…FFGP), 158-178 (LNSF…FPSM), 188-208 (LTQA…SAVV), and 213-233 (FPFG…ILFL). The Di-lysine motif signature appears at 276–279 (KKVQ).

The protein belongs to the ELO family. ELOVL2 subfamily. In terms of assembly, interacts with TECR.

The protein resides in the endoplasmic reticulum membrane. The catalysed reaction is a very-long-chain acyl-CoA + malonyl-CoA + H(+) = a very-long-chain 3-oxoacyl-CoA + CO2 + CoA. The enzyme catalyses (7Z,10Z,13Z,16Z,19Z)-docosapentaenoyl-CoA + malonyl-CoA + H(+) = (9Z,12Z,15Z,18Z,21Z)-3-oxotetracosapentaenoyl-CoA + CO2 + CoA. It carries out the reaction (5Z,8Z,11Z,14Z,17Z)-eicosapentaenoyl-CoA + malonyl-CoA + H(+) = 3-oxo-(7Z,10Z,13Z,16Z,19Z)-docosapentaenoyl-CoA + CO2 + CoA. It catalyses the reaction (5Z,8Z,11Z,14Z)-eicosatetraenoyl-CoA + malonyl-CoA + H(+) = (7Z,10Z,13Z,16Z)-3-oxodocosatetraenoyl-CoA + CO2 + CoA. The catalysed reaction is (7Z,10Z,13Z,16Z)-docosatetraenoyl-CoA + malonyl-CoA + H(+) = (9Z,12Z,15Z,18Z)-3-oxotetracosatetraenoyl-CoA + CO2 + CoA. Its pathway is lipid metabolism; polyunsaturated fatty acid biosynthesis. In terms of biological role, catalyzes the first and rate-limiting reaction of the four reactions that constitute the long-chain fatty acids elongation cycle. This endoplasmic reticulum-bound enzymatic process allows the addition of 2 carbons to the chain of long- and very long-chain fatty acids (VLCFAs) per cycle. Condensing enzyme that catalyzes the synthesis of polyunsaturated very long chain fatty acid (C20- and C22-PUFA), acting specifically toward polyunsaturated acyl-CoA with the higher activity toward C20:4(n-6) acyl-CoA. May participate in the production of polyunsaturated VLCFAs of different chain lengths that are involved in multiple biological processes as precursors of membrane lipids and lipid mediators. The sequence is that of Very long chain fatty acid elongase 2 from Rattus norvegicus (Rat).